A 100-amino-acid chain; its full sequence is Urease subunit gamma (100 aa).

It belongs to the urease gamma subunit family. As to quaternary structure, heterotrimer of UreA (gamma), UreB (beta) and UreC (alpha) subunits. Three heterotrimers associate to form the active enzyme.

It is found in the cytoplasm. It carries out the reaction urea + 2 H2O + H(+) = hydrogencarbonate + 2 NH4(+). The protein operates within nitrogen metabolism; urea degradation; CO(2) and NH(3) from urea (urease route): step 1/1. This chain is Urease subunit gamma, found in Mycobacterium ulcerans (strain Agy99).